The sequence spans 143 residues: 1,4-dihydroxy-2-naphthoyl-CoA hydrolase (143 aa).

D14 is an active-site residue.

Belongs to the 4-hydroxybenzoyl-CoA thioesterase family. DHNA-CoA hydrolase subfamily.

It catalyses the reaction 1,4-dihydroxy-2-naphthoyl-CoA + H2O = 1,4-dihydroxy-2-naphthoate + CoA + H(+). The protein operates within cofactor biosynthesis; phylloquinone biosynthesis. Its pathway is quinol/quinone metabolism; 1,4-dihydroxy-2-naphthoate biosynthesis; 1,4-dihydroxy-2-naphthoate from chorismate: step 7/7. In terms of biological role, catalyzes the hydrolysis of 1,4-dihydroxy-2-naphthoyl-CoA (DHNA-CoA) to 1,4-dihydroxy-2-naphthoate (DHNA), a reaction involved in phylloquinone (vitamin K1) biosynthesis. The protein is 1,4-dihydroxy-2-naphthoyl-CoA hydrolase of Gloeothece citriformis (strain PCC 7424) (Cyanothece sp. (strain PCC 7424)).